Here is a 502-residue protein sequence, read N- to C-terminus: Glycerol kinase (502 aa).

Residue Thr14 coordinates ADP. Residues Thr14, Thr15, and Ser16 each coordinate ATP. Residue Thr14 coordinates sn-glycerol 3-phosphate. Arg18 contacts ADP. Sn-glycerol 3-phosphate contacts are provided by Arg84, Glu85, and Tyr136. Glycerol is bound by residues Arg84, Glu85, and Tyr136. His232 is modified (phosphohistidine; by HPr). Residue Asp246 participates in sn-glycerol 3-phosphate binding. Glycerol-binding residues include Asp246 and Gln247. Residues Thr268 and Gly311 each coordinate ADP. ATP is bound by residues Thr268, Gly311, Gln315, and Gly412. ADP contacts are provided by Gly412 and Asn416.

This sequence belongs to the FGGY kinase family. As to quaternary structure, homotetramer and homodimer (in equilibrium). In terms of processing, the phosphoenolpyruvate-dependent sugar phosphotransferase system (PTS), including enzyme I, and histidine-containing protein (HPr) are required for the phosphorylation, which leads to the activation of the enzyme.

The catalysed reaction is glycerol + ATP = sn-glycerol 3-phosphate + ADP + H(+). It functions in the pathway polyol metabolism; glycerol degradation via glycerol kinase pathway; sn-glycerol 3-phosphate from glycerol: step 1/1. With respect to regulation, activated by phosphorylation and inhibited by fructose 1,6-bisphosphate (FBP). Its function is as follows. Key enzyme in the regulation of glycerol uptake and metabolism. Catalyzes the phosphorylation of glycerol to yield sn-glycerol 3-phosphate. This is Glycerol kinase from Streptococcus pneumoniae (strain 70585).